A 229-amino-acid polypeptide reads, in one-letter code: NAD-dependent protein deacetylase (229 aa).

Residues methionine 1–isoleucine 229 form the Deacetylase sirtuin-type domain. NAD(+)-binding residues include alanine 20, arginine 32, glutamine 96, isoleucine 98, aspartate 99, histidine 114, threonine 181, serine 182, asparagine 205, and valine 223. 2 residues coordinate nicotinamide: isoleucine 98 and aspartate 99. Histidine 114 serves as the catalytic Proton acceptor.

Belongs to the sirtuin family. Class U subfamily.

It is found in the cytoplasm. It catalyses the reaction N(6)-acetyl-L-lysyl-[protein] + NAD(+) + H2O = 2''-O-acetyl-ADP-D-ribose + nicotinamide + L-lysyl-[protein]. In terms of biological role, NAD-dependent protein deacetylase which modulates the activities of several enzymes which are inactive in their acetylated form. In Listeria monocytogenes serovar 1/2a (strain ATCC BAA-679 / EGD-e), this protein is NAD-dependent protein deacetylase.